Here is a 465-residue protein sequence, read N- to C-terminus: Intraflagellar transport protein 54 (465 aa).

Disordered regions lie at residues 119–301 (VRSN…GFTM) and 347–366 (LHGD…DKKP). A coiled-coil region spans residues 144-207 (LEALAREKAE…KQKQQQQQQQ (64 aa)). A compositionally biased stretch (basic and acidic residues) spans 146–198 (ALAREKAEKERQRREQEQQERERKERERQEKEREEREKHELESRERAEAEQWK). The span at 199–220 (QKQQQQQQQQQSAISPQKSPPK) shows a compositional bias: low complexity. A compositionally biased stretch (basic and acidic residues) spans 222–242 (RFADDDKTRVEEHQPVIERPH).

It belongs to the TRAF3IP1 family.

Its subcellular location is the cell projection. It is found in the cilium. The protein localises to the flagellum. The protein resides in the cytoplasm. It localises to the cytoskeleton. Its subcellular location is the flagellum axoneme. It is found in the flagellum basal body. Functionally, component of the intraflagellar transport complex B (IFT-B) involved in flagellar assembly. In Giardia intestinalis (strain ATCC 50803 / WB clone C6) (Giardia lamblia), this protein is Intraflagellar transport protein 54.